A 436-amino-acid chain; its full sequence is Aminopeptidase C (436 aa).

Residues Cys68, His356, and Asn378 contribute to the active site.

This sequence belongs to the peptidase C1 family. Homohexamer.

The catalysed reaction is Inactivates bleomycin B2 (a cytotoxic glycometallopeptide) by hydrolysis of a carboxyamide bond of beta-aminoalanine, but also shows general aminopeptidase activity. The specificity varies somewhat with source, but amino acid arylamides of Met, Leu and Ala are preferred.. Hydrolyzes naphthylamide-substituted amino acids as well as di- and tripeptides in which the half-cystine residue is involved in a disulfide loop, notably in oxytocin and vasopressin. Also has a bleomycin hydrolase activity. This Lactococcus lactis subsp. lactis (strain IL1403) (Streptococcus lactis) protein is Aminopeptidase C (pepC).